Here is a 216-residue protein sequence, read N- to C-terminus: MFNEVHSIHGHTLLLITKSSLQATALLQHLKQSLAITGKLHNIQRSLDDISSGSIILLDMMEADKKLIHYWQDTLSRKNNNIKILLLNTPEDYPYRDIENWPHINGVFYSMEDQERVVNGLQGVLRGECYFTQKLASYLITHSGNYRYNSTESALLTHREKEILNKLRIGASNNEIARSLFISENTVKTHLYNLFKKIAVKNRTQAVSWANDNLRR.

The HTH luxR-type domain maps to 149–214; sequence NSTESALLTH…QAVSWANDNL (66 aa). Positions 173-192 form a DNA-binding region, H-T-H motif; sequence NNEIARSLFISENTVKTHLY.

It is found in the cell inner membrane. The master regulator for adhesive curli fimbriae expression; necessary for transcription of the csgBAC/ymdA operon. Plays a positive role in biofilm formation. May have the capability to respond to starvation and/or high cell density by activating csgBA transcription. Low-level constitutive expression confers an adherent curli fimbriae-expressing phenotype, up-regulates 10 genes and down-regulates 14 others. The polypeptide is CsgBAC operon transcriptional regulatory protein (csgD) (Escherichia coli (strain K12)).